A 270-amino-acid polypeptide reads, in one-letter code: Homeobox protein Hox-D12 (270 aa).

The tract at residues 102-122 is disordered; sequence APEAAAGPEERGRTRPSFAPE. The segment at residues 202–261 is a DNA-binding region (homeobox); it reads ARKKRKPYTKQQIAELENEFLVNEFINRQKRKELSNRLNLSDQQVKIWFQNRRMKKKRVV.

This sequence belongs to the Abd-B homeobox family.

Its subcellular location is the nucleus. Sequence-specific transcription factor which is part of a developmental regulatory system that provides cells with specific positional identities on the anterior-posterior axis. This chain is Homeobox protein Hox-D12 (HOXD12), found in Homo sapiens (Human).